We begin with the raw amino-acid sequence, 653 residues long: Beta-galactosidase-1-like protein 3 (653 aa).

Residue Glu227 is the Proton donor of the active site. Glu301 acts as the Nucleophile in catalysis.

This sequence belongs to the glycosyl hydrolase 35 family.

The protein is Beta-galactosidase-1-like protein 3 (GLB1L3) of Homo sapiens (Human).